The sequence spans 415 residues: Lipoyl synthase, mitochondrial (415 aa).

A mitochondrion-targeting transit peptide spans 1–32; it reads MAASTNRLRFLYSSARTVPQTGSITPISRRTY. Positions 22 to 32 are enriched in polar residues; it reads GSITPISRRTY. The interval 22–53 is disordered; sequence GSITPISRRTYATTEPSPSATGAPATARKRTN. Positions 33 to 47 are enriched in low complexity; it reads ATTEPSPSATGAPAT. [4Fe-4S] cluster contacts are provided by Cys132, Cys137, Cys143, Cys163, Cys167, Cys170, and Ser378. The Radical SAM core domain maps to 146 to 367; the sequence is GSDKSAATAT…RQRALDMGFL (222 aa). Residues 395–415 form a disordered region; sequence AAGTAGESVTDSKAAVDEATR.

Belongs to the radical SAM superfamily. Lipoyl synthase family. The cofactor is [4Fe-4S] cluster.

The protein localises to the mitochondrion. It catalyses the reaction [[Fe-S] cluster scaffold protein carrying a second [4Fe-4S](2+) cluster] + N(6)-octanoyl-L-lysyl-[protein] + 2 oxidized [2Fe-2S]-[ferredoxin] + 2 S-adenosyl-L-methionine + 4 H(+) = [[Fe-S] cluster scaffold protein] + N(6)-[(R)-dihydrolipoyl]-L-lysyl-[protein] + 4 Fe(3+) + 2 hydrogen sulfide + 2 5'-deoxyadenosine + 2 L-methionine + 2 reduced [2Fe-2S]-[ferredoxin]. The protein operates within protein modification; protein lipoylation via endogenous pathway; protein N(6)-(lipoyl)lysine from octanoyl-[acyl-carrier-protein]: step 2/2. Functionally, catalyzes the radical-mediated insertion of two sulfur atoms into the C-6 and C-8 positions of the octanoyl moiety bound to the lipoyl domains of lipoate-dependent enzymes, thereby converting the octanoylated domains into lipoylated derivatives. The polypeptide is Lipoyl synthase, mitochondrial (Aspergillus oryzae (strain ATCC 42149 / RIB 40) (Yellow koji mold)).